Here is a 487-residue protein sequence, read N- to C-terminus: ATP synthase subunit beta, plastid (487 aa).

Residue 169–176 coordinates ATP; the sequence is GGAGVGKT.

The protein belongs to the ATPase alpha/beta chains family. As to quaternary structure, F-type ATPases have 2 components, CF(1) - the catalytic core - and CF(0) - the membrane proton channel. CF(1) has five subunits: alpha(3), beta(3), gamma(1), delta(1), epsilon(1). CF(0) has four main subunits: a(1), b(1), b'(1) and c(9-12).

It localises to the plastid membrane. The enzyme catalyses ATP + H2O + 4 H(+)(in) = ADP + phosphate + 5 H(+)(out). Its function is as follows. Produces ATP from ADP in the presence of a proton gradient across the membrane. The catalytic sites are hosted primarily by the beta subunits. The polypeptide is ATP synthase subunit beta, plastid (atpB) (Cuscuta pentagona (Five-angled dodder)).